We begin with the raw amino-acid sequence, 239 residues long: ATP-dependent dethiobiotin synthetase BioD (239 aa).

Position 15 to 20 (Glu15 to Phe20) interacts with ATP. Thr19 contacts Mg(2+). Lys40 is an active-site residue. Residues Asp57, Glu118–Gly121, and Asn178–His179 each bind ATP. Positions 57 and 118 each coordinate Mg(2+).

It belongs to the dethiobiotin synthetase family. Homodimer. Mg(2+) is required as a cofactor.

It is found in the cytoplasm. It carries out the reaction (7R,8S)-7,8-diammoniononanoate + CO2 + ATP = (4R,5S)-dethiobiotin + ADP + phosphate + 3 H(+). Its pathway is cofactor biosynthesis; biotin biosynthesis; biotin from 7,8-diaminononanoate: step 1/2. Its function is as follows. Catalyzes a mechanistically unusual reaction, the ATP-dependent insertion of CO2 between the N7 and N8 nitrogen atoms of 7,8-diaminopelargonic acid (DAPA, also called 7,8-diammoniononanoate) to form a ureido ring. This is ATP-dependent dethiobiotin synthetase BioD from Burkholderia ambifaria (strain ATCC BAA-244 / DSM 16087 / CCUG 44356 / LMG 19182 / AMMD) (Burkholderia cepacia (strain AMMD)).